The primary structure comprises 256 residues: Putative ankyrin repeat protein PAE1861 (256 aa).

ANK repeat units follow at residues 1-30 (MDCNNLLNAARRGEAELLTRLLNEGCSPDV), 34-63 (YGRTPLYYAAERGDVGTVDLLIKAGADPNA), 67-92 (EGKTPIIIATQSRKFGVIPLLSASAV), 93-122 (GVEEALYTAARNGCHKAVRYMLARGVRPGA), 124-151 (HGESLLHLVAGDAGLVKLLLEYGVDPNA), 155-184 (HGKTPLHMASEHNCAQCVELLLKRGPDVNV), 188-214 (AGRTPLHYADDVDCIKLLLRYGADLNA), and 218-245 (MGRTPLHYAEDGLAAEALLKRGARPVPD).

In Pyrobaculum aerophilum (strain ATCC 51768 / DSM 7523 / JCM 9630 / CIP 104966 / NBRC 100827 / IM2), this protein is Putative ankyrin repeat protein PAE1861.